Here is a 286-residue protein sequence, read N- to C-terminus: Bifunctional protein FolD (286 aa).

NADP(+)-binding positions include 166–168 and Ile232; that span reads GAS.

Belongs to the tetrahydrofolate dehydrogenase/cyclohydrolase family. Homodimer.

It carries out the reaction (6R)-5,10-methylene-5,6,7,8-tetrahydrofolate + NADP(+) = (6R)-5,10-methenyltetrahydrofolate + NADPH. It catalyses the reaction (6R)-5,10-methenyltetrahydrofolate + H2O = (6R)-10-formyltetrahydrofolate + H(+). The protein operates within one-carbon metabolism; tetrahydrofolate interconversion. In terms of biological role, catalyzes the oxidation of 5,10-methylenetetrahydrofolate to 5,10-methenyltetrahydrofolate and then the hydrolysis of 5,10-methenyltetrahydrofolate to 10-formyltetrahydrofolate. The polypeptide is Bifunctional protein FolD (Shewanella denitrificans (strain OS217 / ATCC BAA-1090 / DSM 15013)).